The chain runs to 38 residues: Potassium channel toxin alpha-KTx 3.11 (38 aa).

Cystine bridges form between cysteine 8–cysteine 28, cysteine 14–cysteine 33, and cysteine 18–cysteine 35.

Belongs to the short scorpion toxin superfamily. Potassium channel inhibitor family. Alpha-KTx 03 subfamily. Expressed by the venom gland.

Its subcellular location is the secreted. Its function is as follows. Blocks the voltage-gated potassium channel Kv1.3/KCNA3 (IC(50)=7.2 nM). Correnti and colleagues have also shown that this toxin inhibits Kv1.1/KCNA1, which is different from Abdel-Mottaleb and colleagues conclusions. The sequence is that of Potassium channel toxin alpha-KTx 3.11 from Odontobuthus doriae (Yellow Iranian scorpion).